Reading from the N-terminus, the 155-residue chain is uncharacterized protein (155 aa).

The next 4 membrane-spanning stretches (helical) occupy residues 25-45, 50-70, 91-111, and 118-138; these read LPMGFIGITLFEIGILLFGWT, IFWFVPTIGSAIMGGGYIMTS, GVKIFQLLLGAIFPLFAESLF, and WGCTLLAFILLACGCSLPILF.

This sequence belongs to the major facilitator superfamily. CAR1 family.

It localises to the membrane. This is an uncharacterized protein from Schizosaccharomyces pombe (strain 972 / ATCC 24843) (Fission yeast).